A 356-amino-acid chain; its full sequence is Protein pelota homolog (356 aa).

The protein belongs to the eukaryotic release factor 1 family. Pelota subfamily. As to quaternary structure, monomer. A divalent metal cation serves as cofactor.

Its subcellular location is the cytoplasm. In terms of biological role, may function in recognizing stalled ribosomes, interact with stem-loop structures in stalled mRNA molecules, and effect endonucleolytic cleavage of the mRNA. May play a role in the release non-functional ribosomes and degradation of damaged mRNAs. Has endoribonuclease activity. The protein is Protein pelota homolog of Pyrococcus furiosus (strain ATCC 43587 / DSM 3638 / JCM 8422 / Vc1).